The chain runs to 298 residues: Glyoxalase domain-containing protein 4 (298 aa).

Residues 5–130 enclose the VOC 1 domain; sequence RALHFVFKVG…GGYKFYLQDR (126 aa). K109 bears the N6-succinyllysine mark. S131 carries the post-translational modification Phosphoserine. Residues 137 to 258 form the VOC 2 domain; that stretch reads PVLKVTLAVS…DGHEICFVGD (122 aa). The residue at position 273 (K273) is an N6-succinyllysine.

This sequence belongs to the glyoxalase I family. Interacts with NUDT9.

The protein localises to the mitochondrion. This Rattus norvegicus (Rat) protein is Glyoxalase domain-containing protein 4 (Glod4).